We begin with the raw amino-acid sequence, 261 residues long: Zinc finger protein 664 (261 aa).

C2H2-type zinc fingers lie at residues 3 to 25, 31 to 53, 59 to 81, 87 to 109, 115 to 137, 143 to 165, 171 to 193, 199 to 221, and 227 to 249; these read YKCPMCREFFSERADLFMHQKIH, HKCDKCDKGFFHISELHIHWRDH, YKCDDCVKDFSTTTKLNRHKKIH, YKCYECGKAFNWSSHLQIHMRVH, YVCSECGRGFSNSSNLCMHQRVH, FKCEECGKAFRHTSSLCMHQRVH, YKCYECGKAFSQSSSLCIHQRVH, YRCCGCGKAFSQSSSLCIHQRVH, and FKCDECGKAFSQSTSLCIHQRVH. A Glycyl lysine isopeptide (Lys-Gly) (interchain with G-Cter in SUMO2) cross-link involves residue Lys257.

Belongs to the krueppel C2H2-type zinc-finger protein family.

Its subcellular location is the nucleus. Its function is as follows. May be involved in transcriptional regulation. This is Zinc finger protein 664 (Znf664) from Mus musculus (Mouse).